A 329-amino-acid polypeptide reads, in one-letter code: MSQDRGPRRPRRLEKCALISASATVLSLTASGCVVVHGEREVLPSATRAEAAKALERFTTAYNKADKAYDASLDADHTTGALAAIDSARLKAGAANHPDGNPAHEPLELTDAKFTIPKKAGWPRWFVADTKANKGGTARWLLVFTRDGLEETWEAAYLTLVAPGKVPEFKTDQDGWAEAVPANATDVSVPPAGLSKDYTTYLQDGGKTFADGVHTSSWRALREKRSTRPGLVTQYIDEPLTNGDYAPLALRTEDGGALVFFTSRHFEKQTAARGTSVPTPNKDVLALTDGEIKQSLTMEFVSNEVALDPADGQVSVLGRVQGLTSGKGE.

An N-terminal signal peptide occupies residues 1–32; it reads MSQDRGPRRPRRLEKCALISASATVLSLTASG. The N-palmitoyl cysteine moiety is linked to residue Cys-33. Cys-33 carries the S-diacylglycerol cysteine lipid modification.

It is found in the cell membrane. This is an uncharacterized protein from Streptomyces coelicolor (strain ATCC BAA-471 / A3(2) / M145).